Here is a 482-residue protein sequence, read N- to C-terminus: tRNA sulfurtransferase (482 aa).

Residues 61-165 enclose the THUMP domain; it reads AEVLEILTHT…GDKLNQVLAR (105 aa). ATP-binding positions include 183–184, lysine 265, glycine 287, and glutamine 296; that span reads LI. Cysteine 344 and cysteine 456 are oxidised to a cystine. The 79-residue stretch at 404–482 folds into the Rhodanese domain; the sequence is VEEHAVVLDI…GFNNVKVYRP (79 aa). The active-site Cysteine persulfide intermediate is the cysteine 456.

It belongs to the ThiI family.

It is found in the cytoplasm. It carries out the reaction [ThiI sulfur-carrier protein]-S-sulfanyl-L-cysteine + a uridine in tRNA + 2 reduced [2Fe-2S]-[ferredoxin] + ATP + H(+) = [ThiI sulfur-carrier protein]-L-cysteine + a 4-thiouridine in tRNA + 2 oxidized [2Fe-2S]-[ferredoxin] + AMP + diphosphate. The enzyme catalyses [ThiS sulfur-carrier protein]-C-terminal Gly-Gly-AMP + S-sulfanyl-L-cysteinyl-[cysteine desulfurase] + AH2 = [ThiS sulfur-carrier protein]-C-terminal-Gly-aminoethanethioate + L-cysteinyl-[cysteine desulfurase] + A + AMP + 2 H(+). It participates in cofactor biosynthesis; thiamine diphosphate biosynthesis. Functionally, catalyzes the ATP-dependent transfer of a sulfur to tRNA to produce 4-thiouridine in position 8 of tRNAs, which functions as a near-UV photosensor. Also catalyzes the transfer of sulfur to the sulfur carrier protein ThiS, forming ThiS-thiocarboxylate. This is a step in the synthesis of thiazole, in the thiamine biosynthesis pathway. The sulfur is donated as persulfide by IscS. The chain is tRNA sulfurtransferase from Vibrio parahaemolyticus serotype O3:K6 (strain RIMD 2210633).